Consider the following 200-residue polypeptide: Recombination protein RecR (200 aa).

The segment at 58-75 (CPLCFTLKESKEADCHFC) adopts a C4-type zinc-finger fold. The 96-residue stretch at 82–177 (QSLCIVASPK…NISRLALGLP (96 aa)) folds into the Toprim domain.

It belongs to the RecR family.

May play a role in DNA repair. It seems to be involved in an RecBC-independent recombinational process of DNA repair. It may act with RecF and RecO. This is Recombination protein RecR from Chlamydia pneumoniae (Chlamydophila pneumoniae).